A 238-amino-acid chain; its full sequence is Demethylmenaquinone methyltransferase (238 aa).

S-adenosyl-L-methionine is bound by residues Thr-65, Asp-85, and 109-110; that span reads DA.

It belongs to the class I-like SAM-binding methyltransferase superfamily. MenG/UbiE family.

It catalyses the reaction a 2-demethylmenaquinol + S-adenosyl-L-methionine = a menaquinol + S-adenosyl-L-homocysteine + H(+). It functions in the pathway quinol/quinone metabolism; menaquinone biosynthesis; menaquinol from 1,4-dihydroxy-2-naphthoate: step 2/2. In terms of biological role, methyltransferase required for the conversion of demethylmenaquinol (DMKH2) to menaquinol (MKH2). This chain is Demethylmenaquinone methyltransferase, found in Roseiflexus castenholzii (strain DSM 13941 / HLO8).